Here is a 405-residue protein sequence, read N- to C-terminus: tRNA (uracil(54)-C(5))-methyltransferase (405 aa).

Positions 61, 67, 70, and 137 each coordinate [4Fe-4S] cluster. S-adenosyl-L-methionine contacts are provided by residues Gln252, Tyr278, Thr283, 299–300 (DS), Asp326, and Asp340. Cys367 serves as the catalytic Nucleophile. Glu399 (proton acceptor) is an active-site residue.

Belongs to the class I-like SAM-binding methyltransferase superfamily. RNA M5U methyltransferase family.

The catalysed reaction is uridine(54) in tRNA + S-adenosyl-L-methionine = 5-methyluridine(54) in tRNA + S-adenosyl-L-homocysteine + H(+). Its activity is regulated as follows. Activated by magnesium ions. In terms of biological role, catalyzes the formation of 5-methyl-uridine at position 54 (m5U54) in tRNA. This chain is tRNA (uracil(54)-C(5))-methyltransferase, found in Pyrococcus abyssi (strain GE5 / Orsay).